A 213-amino-acid chain; its full sequence is Penicillin-binding protein activator LpoB (213 aa).

The signal sequence occupies residues methionine 1–glycine 19. A lipid anchor (N-palmitoyl cysteine) is attached at cysteine 20. Residue cysteine 20 is the site of S-diacylglycerol cysteine attachment. Positions proline 28–histidine 74 are disordered. Over residues proline 36–proline 50 the composition is skewed to pro residues.

The protein belongs to the LpoB family. In terms of assembly, interacts with PBP1b.

It localises to the cell outer membrane. Regulator of peptidoglycan synthesis that is essential for the function of penicillin-binding protein 1B (PBP1b). The protein is Penicillin-binding protein activator LpoB of Escherichia coli O157:H7.